A 318-amino-acid polypeptide reads, in one-letter code: Ferrochelatase (318 aa).

Residues His186 and Glu264 each contribute to the Fe cation site.

The protein belongs to the ferrochelatase family.

The protein resides in the cytoplasm. It catalyses the reaction heme b + 2 H(+) = protoporphyrin IX + Fe(2+). The protein operates within porphyrin-containing compound metabolism; protoheme biosynthesis; protoheme from protoporphyrin-IX: step 1/1. In terms of biological role, catalyzes the ferrous insertion into protoporphyrin IX. The protein is Ferrochelatase of Chlamydia abortus (strain DSM 27085 / S26/3) (Chlamydophila abortus).